A 178-amino-acid chain; its full sequence is CASP-like protein 2A2 (178 aa).

At 1–22 (MDKTDQTAIDGSALELNRTEKT) the chain is on the cytoplasmic side. Residues 23-43 (VEAVLRVASMALSITGLVIMI) traverse the membrane as a helical segment. Over 44 to 69 (KNSISNDFGSLSYSNLGAFMYLVGAN) the chain is Extracellular. Residues 70–90 (GVCAAYSLLSALAILALPCPI) traverse the membrane as a helical segment. Topologically, residues 91–96 (SKVQVR) are cytoplasmic. A helical transmembrane segment spans residues 97 to 117 (TLFLLDQVVTYVVLAAGAVSA). Residues 118–145 (ETVYLAYYGNIPITWSSACDSYGIFCHK) are Extracellular-facing. A helical membrane pass occupies residues 146–166 (ALISVVFTFVVSLLYMLLSLI). Topologically, residues 167–178 (SSYRLFSRFEAP) are cytoplasmic.

It belongs to the Casparian strip membrane proteins (CASP) family. Homodimer and heterodimers.

Its subcellular location is the cell membrane. In Arabidopsis lyrata subsp. lyrata (Lyre-leaved rock-cress), this protein is CASP-like protein 2A2.